Consider the following 404-residue polypeptide: Phosphoglycerate kinase (404 aa).

Substrate contacts are provided by residues 22-24, Arg37, 60-63, Arg120, and Arg160; these read DFN and HLGR. Residues Lys215, Glu333, and 360 to 363 each bind ATP; that span reads GGDS.

It belongs to the phosphoglycerate kinase family. As to quaternary structure, monomer.

It is found in the cytoplasm. It catalyses the reaction (2R)-3-phosphoglycerate + ATP = (2R)-3-phospho-glyceroyl phosphate + ADP. The protein operates within carbohydrate degradation; glycolysis; pyruvate from D-glyceraldehyde 3-phosphate: step 2/5. This is Phosphoglycerate kinase from Latilactobacillus sakei subsp. sakei (strain 23K) (Lactobacillus sakei subsp. sakei).